Reading from the N-terminus, the 224-residue chain is Mammalian ependymin-related protein 1 (224 aa).

The signal sequence occupies residues 1–37 (MPARAPRRLVQGPRGTWLLGSLWVWVLCGLGMAGSLG). Intrachain disulfides connect cysteine 42–cysteine 172, cysteine 88–cysteine 222, and cysteine 113–cysteine 210. Asparagine 130 and asparagine 182 each carry an N-linked (GlcNAc...) asparagine glycan.

Belongs to the ependymin family. In terms of assembly, homodimer. Post-translationally, N-glycosylated; the glycan contains mannose-6-phosphate moieties. As to expression, detected in brain, small intestine and in soleus, extensor digitorum longus and white gastrocnemius (at protein level). Detected in brain and skeletal muscle, and at lower leavels in heart.

It is found in the lysosome lumen. The protein localises to the secreted. Binds anionic lipids and gangliosides at acidic pH. The polypeptide is Mammalian ependymin-related protein 1 (Epdr1) (Mus musculus (Mouse)).